The primary structure comprises 243 residues: Pyridoxine 5'-phosphate synthase (243 aa).

Asn-9 is a 3-amino-2-oxopropyl phosphate binding site. A 1-deoxy-D-xylulose 5-phosphate-binding site is contributed by 11–12; the sequence is DH. Arg-20 serves as a coordination point for 3-amino-2-oxopropyl phosphate. His-45 serves as the catalytic Proton acceptor. Residues Arg-47 and His-52 each contribute to the 1-deoxy-D-xylulose 5-phosphate site. The Proton acceptor role is filled by Glu-72. 1-deoxy-D-xylulose 5-phosphate is bound at residue Thr-102. The active-site Proton donor is His-193. Residues Gly-194 and 215–216 contribute to the 3-amino-2-oxopropyl phosphate site; that span reads GH.

The protein belongs to the PNP synthase family. As to quaternary structure, homooctamer; tetramer of dimers.

Its subcellular location is the cytoplasm. The enzyme catalyses 3-amino-2-oxopropyl phosphate + 1-deoxy-D-xylulose 5-phosphate = pyridoxine 5'-phosphate + phosphate + 2 H2O + H(+). It functions in the pathway cofactor biosynthesis; pyridoxine 5'-phosphate biosynthesis; pyridoxine 5'-phosphate from D-erythrose 4-phosphate: step 5/5. Its function is as follows. Catalyzes the complicated ring closure reaction between the two acyclic compounds 1-deoxy-D-xylulose-5-phosphate (DXP) and 3-amino-2-oxopropyl phosphate (1-amino-acetone-3-phosphate or AAP) to form pyridoxine 5'-phosphate (PNP) and inorganic phosphate. The chain is Pyridoxine 5'-phosphate synthase from Photorhabdus laumondii subsp. laumondii (strain DSM 15139 / CIP 105565 / TT01) (Photorhabdus luminescens subsp. laumondii).